The chain runs to 377 residues: Presenilin-associated rhomboid-like protein, mitochondrial (377 aa).

The transit peptide at 1–50 directs the protein to the mitochondrion; that stretch reads MALYSWVQRGWRCGQTWAPLLGGGYRELSATQARQLLGRRFNLLLQQKCG. The Mitochondrial matrix segment spans residues 51 to 95; it reads FRKAPRKVEPRRSDTGSSGEAYKRSALIPPLEETVFYPSPYPVRT. 2 positions are modified to phosphoserine: Ser63 and Ser68. The helical transmembrane segment at 96 to 116 threads the bilayer; it reads LLKPFFFTVGFTGCAFGSAAI. The Mitochondrial intermembrane portion of the chain corresponds to 117-165; it reads WQYESLKSRVQSYFDGIKADWLDSIRPQKEGNLRKEINKWWNSLSDGQR. The chain crosses the membrane as a helical span at residues 166-186; sequence TVTGIIAANALVFCLWRVPSL. The Mitochondrial matrix segment spans residues 187–214; sequence HRTMIRYFTSNPASKVLCSPMLLSTFSH. A helical transmembrane segment spans residues 215–235; that stretch reads FSLFHMAANMYVLWSFSTSIV. Over 236 to 242 the chain is Mitochondrial intermembrane; it reads NILGQEQ. The helical transmembrane segment at 243 to 263 threads the bilayer; sequence FVAVYLSAGVISNFVSYVCKV. The Mitochondrial matrix portion of the chain corresponds to 264-268; sequence ATGRY. The helical transmembrane segment at 269-289 threads the bilayer; that stretch reads GPSLGASGAIMTVLAAVCTKI. Residue Ser275 is the Nucleophile of the active site. Over 290–293 the chain is Mitochondrial intermembrane; the sequence is PEGR. Residues 294–314 traverse the membrane as a helical segment; that stretch reads LAIIFLPVFTFTAGNALKAII. Over 315-331 the chain is Mitochondrial matrix; that stretch reads AMDTAGMILGWKFFDHA. A helical transmembrane segment spans residues 332–352; the sequence is AHLGGALFGIWYITYGHELIW. The active site involves His333. The Mitochondrial intermembrane segment spans residues 353–377; sequence KNREPLVKIWHEIRTNGPKKGGGSK.

This sequence belongs to the peptidase S54 family. In terms of assembly, interacts with PSEN1 and PSEN2. Binds OPA1. In terms of processing, P-beta is proteolytically processed (beta-cleavage) in a PARL-dependent manner.

It is found in the mitochondrion inner membrane. It localises to the nucleus. The enzyme catalyses Cleaves type-1 transmembrane domains using a catalytic dyad composed of serine and histidine that are contributed by different transmembrane domains.. Functionally, required for the control of apoptosis during postnatal growth. Essential for proteolytic processing of an antiapoptotic form of OPA1 which prevents the release of mitochondrial cytochrome c in response to intrinsic apoptotic signals. Required for the maturation of PINK1 into its 52kDa mature form after its cleavage by mitochondrial-processing peptidase (MPP). Promotes cleavage of serine/threonine-protein phosphatase PGAM5 in damaged mitochondria in response to loss of mitochondrial membrane potential. Mediates differential cleavage of PINK1 and PGAM5 depending on the health status of mitochondria, disassociating from PINK1 and associating with PGAM5 in response to mitochondrial membrane potential loss. Required for processing of CLPB into a form with higher protein disaggregase activity by removing an autoinhibitory N-terminal peptide. Promotes processing of DIABLO/SMAC in the mitochondrion which is required for DIABLO apoptotic activity. Also required for cleavage of STARD7 and TTC19. Promotes changes in mitochondria morphology regulated by phosphorylation of P-beta domain. This Rattus norvegicus (Rat) protein is Presenilin-associated rhomboid-like protein, mitochondrial.